Consider the following 1337-residue polypeptide: Rho GTPase-activating protein 29 (1337 aa).

Over residues 1–13 the composition is skewed to polar residues; it reads MFRQGSNSGNKRM. Disordered regions lie at residues 1–20, 369–397, 513–551, and 564–654; these read MFRQ…ARLS, REEY…LEKK, SSKT…ADEV, and ERRS…TGLS. Residues 225-488 form the F-BAR domain; sequence EQVDLLLLKN…QAKKYEPGQR (264 aa). Residues 326–443 are a coiled coil; sequence LLARKNDLDK…SEILAQIRKL (118 aa). The segment covering 369–384 has biased composition (basic and acidic residues); sequence REEYEKARSSTSRTEE. Composition is skewed to polar residues over residues 525–545 and 568–579; these read QNST…SMDN and NSSIDMQVPRTQ. A compositionally biased stretch (low complexity) spans 596–613; it reads CSDSESAGGSSESRSMDS. The segment at 676 to 723 adopts a Phorbol-ester/DAG-type zinc-finger fold; the sequence is AHTHKLRKLRAPSKCRECDSLVVFHGAECEECSLACHKKCLETLAIQC. The Rho-GAP domain maps to 737–950; that stretch reads IDFAQVVKNS…LLIKHHQMIF (214 aa). Positions 960–973 are enriched in polar residues; it reads TSPTVSQASFGSSI. Disordered regions lie at residues 960–983, 1016–1066, 1083–1114, 1149–1210, and 1273–1337; these read TSPT…LSRH, MKTG…AKPV, SRNT…TNFY, PPSG…KPSD, and TVSR…AHFV. A compositionally biased stretch (basic and acidic residues) spans 974–983; that stretch reads QDKESKLSRH. A compositionally biased stretch (basic and acidic residues) spans 1083–1092; the sequence is SRNTVEHDHS. Composition is skewed to polar residues over residues 1161–1177 and 1295–1310; these read MASQ…SQSG and VTLS…TEEL. The segment covering 1325 to 1337 has biased composition (basic and acidic residues); the sequence is RMQELEHREAHFV.

In terms of biological role, GTPase activator for the Rho-type GTPases by converting them to an inactive GDP-bound state. Has strong activity toward RHOA, and weaker activity toward RAC1 and CDC42. In Danio rerio (Zebrafish), this protein is Rho GTPase-activating protein 29 (arhgap29).